Consider the following 545-residue polypeptide: Inosine-5'-monophosphate dehydrogenase (545 aa).

CBS domains are found at residues 138–194 (MITD…DYDT) and 201–258 (MTKE…PDAT). NAD(+) contacts are provided by residues aspartate 295 and 347-349 (GIG). 2 residues coordinate K(+): glycine 349 and glycine 351. Serine 352 serves as a coordination point for IMP. Cysteine 354 is a binding site for K(+). Cysteine 354 serves as the catalytic Thioimidate intermediate. IMP contacts are provided by residues 387-389 (DGG), 410-411 (GG), and 434-438 (YRGMG). Arginine 455 serves as the catalytic Proton acceptor. Glutamate 470 is a binding site for IMP. Residues glutamate 524, serine 525, and histidine 526 each coordinate K(+).

The protein belongs to the IMPDH/GMPR family. As to quaternary structure, homotetramer. Requires K(+) as cofactor.

It carries out the reaction IMP + NAD(+) + H2O = XMP + NADH + H(+). It participates in purine metabolism; XMP biosynthesis via de novo pathway; XMP from IMP: step 1/1. With respect to regulation, mycophenolic acid (MPA) is a non-competitive inhibitor that prevents formation of the closed enzyme conformation by binding to the same site as the amobile flap. In contrast, mizoribine monophosphate (MZP) is a competitive inhibitor that induces the closed conformation. MPA is a potent inhibitor of mammalian IMPDHs but a poor inhibitor of the bacterial enzymes. MZP is a more potent inhibitor of bacterial IMPDH. In terms of biological role, catalyzes the conversion of inosine 5'-phosphate (IMP) to xanthosine 5'-phosphate (XMP), the first committed and rate-limiting step in the de novo synthesis of guanine nucleotides, and therefore plays an important role in the regulation of cell growth. This chain is Inosine-5'-monophosphate dehydrogenase, found in Bifidobacterium longum (strain NCC 2705).